A 252-amino-acid polypeptide reads, in one-letter code: Ribosome maturation factor RimP (252 aa).

The segment at 188 to 252 (QGAAPGTEGG…PAAGPGAQDE (65 aa)) is disordered. The segment covering 208-224 (ARRPHQPKPKKAKKKGP) has biased composition (basic residues).

Belongs to the RimP family.

The protein localises to the cytoplasm. Functionally, required for maturation of 30S ribosomal subunits. This chain is Ribosome maturation factor RimP, found in Rhodospirillum centenum (strain ATCC 51521 / SW).